A 292-amino-acid polypeptide reads, in one-letter code: Homoserine kinase (292 aa).

84 to 94 (PLARGMGSSSA) contributes to the ATP binding site.

It belongs to the GHMP kinase family. Homoserine kinase subfamily.

Its subcellular location is the cytoplasm. It carries out the reaction L-homoserine + ATP = O-phospho-L-homoserine + ADP + H(+). It functions in the pathway amino-acid biosynthesis; L-threonine biosynthesis; L-threonine from L-aspartate: step 4/5. In terms of biological role, catalyzes the ATP-dependent phosphorylation of L-homoserine to L-homoserine phosphate. This Thermus thermophilus (strain ATCC BAA-163 / DSM 7039 / HB27) protein is Homoserine kinase.